The primary structure comprises 1086 residues: Isoleucine--tRNA ligase (1086 aa).

The short motif at 53-63 (PFANGLPHYGH) is the 'HIGH' region element. A 'KMSKS' region motif is present at residues 624–628 (KLSKR). Residue Lys-627 coordinates ATP.

It belongs to the class-I aminoacyl-tRNA synthetase family. IleS type 2 subfamily. Monomer. The cofactor is Zn(2+).

Its subcellular location is the cytoplasm. It carries out the reaction tRNA(Ile) + L-isoleucine + ATP = L-isoleucyl-tRNA(Ile) + AMP + diphosphate. In terms of biological role, catalyzes the attachment of isoleucine to tRNA(Ile). As IleRS can inadvertently accommodate and process structurally similar amino acids such as valine, to avoid such errors it has two additional distinct tRNA(Ile)-dependent editing activities. One activity is designated as 'pretransfer' editing and involves the hydrolysis of activated Val-AMP. The other activity is designated 'posttransfer' editing and involves deacylation of mischarged Val-tRNA(Ile). The protein is Isoleucine--tRNA ligase of Rickettsia prowazekii (strain Madrid E).